The chain runs to 427 residues: Enolase (427 aa).

Residue Gln163 coordinates (2R)-2-phosphoglycerate. Glu205 acts as the Proton donor in catalysis. Residues Asp242, Glu288, and Asp315 each contribute to the Mg(2+) site. Residues Lys340, Arg369, Ser370, and Lys391 each contribute to the (2R)-2-phosphoglycerate site. Catalysis depends on Lys340, which acts as the Proton acceptor.

Belongs to the enolase family. Mg(2+) is required as a cofactor.

The protein localises to the cytoplasm. It localises to the secreted. The protein resides in the cell surface. It catalyses the reaction (2R)-2-phosphoglycerate = phosphoenolpyruvate + H2O. It functions in the pathway carbohydrate degradation; glycolysis; pyruvate from D-glyceraldehyde 3-phosphate: step 4/5. Catalyzes the reversible conversion of 2-phosphoglycerate (2-PG) into phosphoenolpyruvate (PEP). It is essential for the degradation of carbohydrates via glycolysis. This is Enolase from Cytophaga hutchinsonii (strain ATCC 33406 / DSM 1761 / CIP 103989 / NBRC 15051 / NCIMB 9469 / D465).